The primary structure comprises 242 residues: Ubiquinone biosynthesis O-methyltransferase (242 aa).

S-adenosyl-L-methionine-binding residues include R44, G64, D85, and M129.

It belongs to the methyltransferase superfamily. UbiG/COQ3 family.

The enzyme catalyses a 3-demethylubiquinol + S-adenosyl-L-methionine = a ubiquinol + S-adenosyl-L-homocysteine + H(+). The catalysed reaction is a 3-(all-trans-polyprenyl)benzene-1,2-diol + S-adenosyl-L-methionine = a 2-methoxy-6-(all-trans-polyprenyl)phenol + S-adenosyl-L-homocysteine + H(+). Its pathway is cofactor biosynthesis; ubiquinone biosynthesis. O-methyltransferase that catalyzes the 2 O-methylation steps in the ubiquinone biosynthetic pathway. The protein is Ubiquinone biosynthesis O-methyltransferase of Klebsiella pneumoniae subsp. pneumoniae (strain ATCC 700721 / MGH 78578).